Reading from the N-terminus, the 406-residue chain is Kelch domain-containing protein 2 (406 aa).

Kelch repeat units follow at residues 31 to 85 (ERSG…NTEG), 92 to 136 (SGSC…ERID), 148 to 207 (LGVW…TWSQ), 221 to 259 (HACA…NELI), 271 to 311 (HSLT…IQFN), and 322 to 359 (HTAC…IFSV).

In terms of assembly, component of a CRL2(KLHDC2) E3 ubiquitin-protein ligase complex, also named ECS(KLHDC2) complex, composed of CUL2, Elongin BC (ELOB and ELOC), RBX1 and substrate-specific adapter KLHDC2. May form oligomers as a KLHDC2-ELOB-ELOC complex; this interaction is autoinhibitory for the E3 ligase complex as the substrate-binding site of KLHDC2 is blocked in the oligomer. Interacts with CREB3; interaction is direct and specific as it does not interact with CREB1, ATF4, ATF6, JUN, FOS, CEBPA or herpes simplex virus transactivator VP16. In terms of processing, autoubiquitinated by the CRL2(KLHDC2) E3 ligase complex. Widely expressed, with high levels in skeletal muscle, heart, pancreas and liver. Undetectable in peripheral blood leukocytes.

The protein resides in the nucleus. The protein operates within protein modification; protein ubiquitination. Substrate-recognition component of a Cul2-RING (CRL2) E3 ubiquitin-protein ligase complex of the DesCEND (destruction via C-end degrons) pathway, which recognizes a C-degron located at the extreme C terminus of target proteins, leading to their ubiquitination and degradation. The C-degron recognized by the DesCEND pathway is usually a motif of less than ten residues and can be present in full-length proteins, truncated proteins or proteolytically cleaved forms. The CRL2(KLHDC2) complex specifically recognizes proteins with a diglycine (Gly-Gly) at the C-terminus, leading to their ubiquitination and degradation. The CRL2(KLHDC2) complex mediates ubiquitination and degradation of truncated SELENOK and SELENOS selenoproteins produced by failed UGA/Sec decoding, which end with a diglycine. The CRL2(KLHDC2) complex also recognizes proteolytically cleaved proteins ending with Gly-Gly, such as the N-terminal fragment of USP1, leading to their degradation. May also act as an indirect repressor of CREB3-mediated transcription by interfering with CREB3-DNA-binding. The sequence is that of Kelch domain-containing protein 2 from Homo sapiens (Human).